Reading from the N-terminus, the 179-residue chain is ATP-dependent protease subunit HslV (179 aa).

Residue Thr-7 is part of the active site. Residues Gly-162, Cys-165, and Thr-168 each contribute to the Na(+) site.

Belongs to the peptidase T1B family. HslV subfamily. A double ring-shaped homohexamer of HslV is capped on each side by a ring-shaped HslU homohexamer. The assembly of the HslU/HslV complex is dependent on binding of ATP.

The protein resides in the cytoplasm. The enzyme catalyses ATP-dependent cleavage of peptide bonds with broad specificity.. With respect to regulation, allosterically activated by HslU binding. Protease subunit of a proteasome-like degradation complex believed to be a general protein degrading machinery. In Saccharophagus degradans (strain 2-40 / ATCC 43961 / DSM 17024), this protein is ATP-dependent protease subunit HslV.